Here is a 114-residue protein sequence, read N- to C-terminus: MAVGHYDLKRTKNKQYYFNLKASNGEVILTSEMYTTKAAANKGIRSVQANSPAEKNFEIRENKSGKSYFVLKARNYQVIGISESYDNEVAVKKGIQSAIKHGSSVNVRDLTKSE.

2 repeat units span residues 11-59 (TKNK…NFEI) and 62-110 (NKSG…VRDL).

The protein belongs to the UPF0339 family. Duplicated subfamily.

The protein is UPF0339 protein plu2779 of Photorhabdus laumondii subsp. laumondii (strain DSM 15139 / CIP 105565 / TT01) (Photorhabdus luminescens subsp. laumondii).